We begin with the raw amino-acid sequence, 398 residues long: Argininosuccinate synthase (398 aa).

Residue 10–18 coordinates ATP; it reads AYSGGLDTS. Tyr-87 contributes to the L-citrulline binding site. Position 117 (Gly-117) interacts with ATP. Residues Thr-119, Asn-123, and Asp-124 each coordinate L-aspartate. Position 123 (Asn-123) interacts with L-citrulline. 4 residues coordinate L-citrulline: Arg-127, Ser-175, Glu-260, and Tyr-272.

This sequence belongs to the argininosuccinate synthase family. Type 1 subfamily. Homotetramer.

The protein resides in the cytoplasm. It catalyses the reaction L-citrulline + L-aspartate + ATP = 2-(N(omega)-L-arginino)succinate + AMP + diphosphate + H(+). Its pathway is amino-acid biosynthesis; L-arginine biosynthesis; L-arginine from L-ornithine and carbamoyl phosphate: step 2/3. The sequence is that of Argininosuccinate synthase from Lactococcus lactis subsp. lactis (strain IL1403) (Streptococcus lactis).